The chain runs to 521 residues: Medium/long-chain-fatty-acid--[acyl-carrier-protein] ligase MbtM (521 aa).

The protein belongs to the ATP-dependent AMP-binding enzyme family.

It carries out the reaction a long-chain fatty acid + holo-[ACP] + ATP = a long-chain fatty acyl-[ACP] + AMP + diphosphate. The enzyme catalyses a medium-chain fatty acid + holo-[ACP] + ATP = a medium-chain fatty acyl-[ACP] + AMP + diphosphate. The protein operates within siderophore biosynthesis; mycobactin biosynthesis. Activates lipidic moieties required for mycobactin biosynthesis. Converts medium- to long-chain aliphatic fatty acids into acyl adenylate, which is further transferred on to the phosphopantetheine arm of the carrier protein MbtL. The polypeptide is Medium/long-chain-fatty-acid--[acyl-carrier-protein] ligase MbtM (mbtM) (Mycobacterium bovis (strain ATCC BAA-935 / AF2122/97)).